Here is a 51-residue protein sequence, read N- to C-terminus: Lantibiotic streptococcin A-M49 (51 aa).

A propeptide spanning residues 1–25 (MTKEHEIINSIQEVSLEELDQIIGA) is cleaved from the precursor. Cross-links (beta-methyllanthionine (Thr-Cys)) lie at residues 33–38 (TISHEC) and 42–50 (TWAFLATCC). The lanthionine (Ser-Cys) cross-link spans 35–49 (SHECHLNTWAFLATC). Thr-48 carries the post-translational modification 2,3-didehydrobutyrine.

It belongs to the type A lantibiotic family. Post-translationally, maturation of lantibiotics involves the enzymatic conversion of Thr, and Ser into dehydrated AA and the formation of thioether bonds with cysteine. This is followed by membrane translocation and cleavage of the modified precursor.

Its subcellular location is the secreted. The protein resides in the cell surface. Its function is as follows. Lanthionine-containing peptide antibiotic (lantibiotic) active on certain Gram-positive bacteria. The bactericidal activity of lantibiotics is based on depolarization of energized bacterial cytoplasmic membranes, initiated by the formation of aqueous transmembrane pores. The sequence is that of Lantibiotic streptococcin A-M49 (scnA') from Streptococcus pyogenes serotype M49.